Reading from the N-terminus, the 580-residue chain is MVDFRFEVKARDASGRIGKLTVNGKTVETPAIMPVINPKQLIVTPKELKEMGFGMIITNSYIIYKTPELREKALEVGIHKLLDYDGIIEVDSGSFQLMRYGGVEVTNREIVEFQHEIGVDIGTFLDIPTPPDAPREKAEEDLRITLERAKEAEEIKEIAMNAAVQGSTYPDLRTYAARELSRMNFEIHPIGAVVPLMESYRYRDLVDVVIASKVGLRPDRPVHLFGAGHPMIFALAVAMGIDLFDSASYALYAKDDRYMTPEGTKRLEELEYFPCSCPVCSRYTPQELREMPKEERTRLLAIHNLWVIREELNRVKQAIKEGELWRLVDERARSHPKLYAAYKRLLEYREYLEKNEPVTKASAFFKVSEEALRWPIVERARERAERVRSKFPETISHPIFGEIPKYLSLSYPFAQSEGEEDFTVEKPEKGEARKYVMAVAEYQFGEGAGEAFKDAFVELSRKTGMPRQIKAKGKHLATFRAEDGLLTLGIEGAKRLHEVLPFPRMRVVVDEDAEPFARRGKNVFAKFVVDADLNIRPYDEVLVVNRNDELLATGQTLLNGEELKIFQQGLAVKVRRGVEK.

Catalysis depends on D91, which acts as the Nucleophile. Substrate is bound by residues D126 and A192. Residues C275, C277, and C280 each coordinate Zn(2+). The PUA domain occupies 504 to 579 (RMRVVVDEDA…LAVKVRRGVE (76 aa)).

It belongs to the archaeosine tRNA-ribosyltransferase family. Zn(2+) is required as a cofactor.

The enzyme catalyses guanosine(15) in tRNA + 7-cyano-7-deazaguanine = 7-cyano-7-carbaguanosine(15) in tRNA + guanine. It participates in tRNA modification; archaeosine-tRNA biosynthesis. Exchanges the guanine residue with 7-cyano-7-deazaguanine (preQ0) at position 15 in the dihydrouridine loop (D-loop) of archaeal tRNAs. In Thermococcus kodakarensis (strain ATCC BAA-918 / JCM 12380 / KOD1) (Pyrococcus kodakaraensis (strain KOD1)), this protein is tRNA-guanine(15) transglycosylase.